The primary structure comprises 348 residues: Fe(3+) ions import ATP-binding protein FbpC (348 aa).

Residues 7-237 (VELRNVTKRF…PASRFMASFM (231 aa)) form the ABC transporter domain. ATP is bound at residue 39 to 46 (GPSGCGKT).

It belongs to the ABC transporter superfamily. Fe(3+) ion importer (TC 3.A.1.10) family. As to quaternary structure, the complex is composed of two ATP-binding proteins (FbpC), two transmembrane proteins (FbpB) and a solute-binding protein (FbpA).

It is found in the cell inner membrane. It carries out the reaction Fe(3+)(out) + ATP + H2O = Fe(3+)(in) + ADP + phosphate + H(+). Part of the ABC transporter complex FbpABC involved in Fe(3+) ions import. Responsible for energy coupling to the transport system. This chain is Fe(3+) ions import ATP-binding protein FbpC, found in Escherichia coli (strain K12).